The following is a 655-amino-acid chain: Squalene-tetrahymanol cyclase THC1 (655 aa).

The first 20 residues, 1-20, serve as a signal peptide directing secretion; the sequence is MKKILIGLIIGLFLFSSVNA. Residues N23, N44, N69, and N77 are each glycosylated (N-linked (GlcNAc...) asparagine). The active-site Proton donor is the D373. 2 PFTB repeats span residues 393–435 and 515–562; these read IPET…GIAN and VQNS…GLLA.

It belongs to the terpene cyclase/mutase family.

It is found in the membrane. It carries out the reaction tetrahymanol = squalene + H2O. Its activity is regulated as follows. 2,3-iminosqualene and N,N-dimethyldodecylamine~N-oxlde are effective inhibitors with IC(50) values of 50 and 30 nM, respectively. In terms of biological role, squalene cyclase that catalyzes the oxygen-independent cyclization of squalene into tetrahymanol, a triterpenoid sterol with five cyclohexyl rings that is involved in membrane integrity, permeability and fluidity. This Tetrahymena thermophila (strain SB210) protein is Squalene-tetrahymanol cyclase THC1.